A 215-amino-acid chain; its full sequence is Mediator of RNA polymerase II transcription subunit 20 (215 aa).

The protein belongs to the Mediator complex subunit 20 family. In terms of assembly, component of the Mediator complex.

Its subcellular location is the nucleus. In terms of biological role, component of the Mediator complex, a coactivator involved in the regulated transcription of nearly all RNA polymerase II-dependent genes. Mediator functions as a bridge to convey information from gene-specific regulatory proteins to the basal RNA polymerase II transcription machinery. Mediator is recruited to promoters by direct interactions with regulatory proteins and serves as a scaffold for the assembly of a functional preinitiation complex with RNA polymerase II and the general transcription factors. This chain is Mediator of RNA polymerase II transcription subunit 20 (SRB2), found in Candida glabrata (strain ATCC 2001 / BCRC 20586 / JCM 3761 / NBRC 0622 / NRRL Y-65 / CBS 138) (Yeast).